The following is a 146-amino-acid chain: Transcriptional regulator MraZ (146 aa).

SpoVT-AbrB domains are found at residues 7 to 54 and 83 to 126; these read NATN…GLDL and GVFV…QPEA.

It belongs to the MraZ family. In terms of assembly, forms oligomers.

It localises to the cytoplasm. The protein localises to the nucleoid. The chain is Transcriptional regulator MraZ from Rhizobium rhizogenes (strain K84 / ATCC BAA-868) (Agrobacterium radiobacter).